The chain runs to 265 residues: Putative Tubby-like protein 4 (265 aa).

Positions 1-44 (MPPELLRDVLMRIERSEDTWPSRKNVVSCVGVCKNWRQIFKEIV) constitute an F-box domain. Residues 228 to 250 (SYELKLALYFAKNSAILKKFVLR) enclose the FBD domain.

It belongs to the TUB family.

The chain is Putative Tubby-like protein 4 from Arabidopsis thaliana (Mouse-ear cress).